Consider the following 54-residue polypeptide: Salt stress-induced hydrophobic peptide ESI3 (54 aa).

2 helical membrane passes run 2–22 (GSAT…GVFL) and 34–54 (LLLT…VLVV).

Belongs to the UPF0057 (PMP3) family.

It is found in the membrane. This is Salt stress-induced hydrophobic peptide ESI3 (ESI3) from Thinopyrum elongatum (Tall wheatgrass).